We begin with the raw amino-acid sequence, 297 residues long: Bifunctional protein FolD (297 aa).

Residues Gly-167–Ser-169 and Ile-233 contribute to the NADP(+) site.

It belongs to the tetrahydrofolate dehydrogenase/cyclohydrolase family. Homodimer.

The catalysed reaction is (6R)-5,10-methylene-5,6,7,8-tetrahydrofolate + NADP(+) = (6R)-5,10-methenyltetrahydrofolate + NADPH. It catalyses the reaction (6R)-5,10-methenyltetrahydrofolate + H2O = (6R)-10-formyltetrahydrofolate + H(+). It functions in the pathway one-carbon metabolism; tetrahydrofolate interconversion. In terms of biological role, catalyzes the oxidation of 5,10-methylenetetrahydrofolate to 5,10-methenyltetrahydrofolate and then the hydrolysis of 5,10-methenyltetrahydrofolate to 10-formyltetrahydrofolate. This is Bifunctional protein FolD from Zymomonas mobilis subsp. mobilis (strain ATCC 31821 / ZM4 / CP4).